The sequence spans 561 residues: SUN domain-containing protein 5 (561 aa).

The chain crosses the membrane as a helical span at residues 36 to 56 (GSFFERSISLVLLLWCFLFLV). In terms of domain architecture, SUN spans 158 to 318 (NGSSQLVNNG…SVVEVFGIDA (161 aa)). Residues 345-367 (ADEKQDGEIKSNRTDQIGKETEA) are disordered. Positions 454-499 (MEKELRDLELWKTLVASRVESLARGNSALRLDVEKIVKEQANLESK) form a coiled coil. The next 2 helical transmembrane spans lie at 501-521 (LGVL…LVST) and 540-560 (PDSG…IHLL).

In terms of assembly, forms homomers. Interacts with SUN3 and TIK.

It is found in the membrane. Functionally, encodes a member of the mid-SUN subfamily of SUN-domain proteins. It is involved in early seed development and nuclear morphology. [TAIR]. The protein is SUN domain-containing protein 5 of Arabidopsis thaliana (Mouse-ear cress).